Here is a 1070-residue protein sequence, read N- to C-terminus: Duffy receptor gamma form (1070 aa).

A signal peptide spans M1–A21. The Extracellular segment spans residues N22–S1003. 2 N-linked (GlcNAc...) asparagine glycosylation sites follow: N134 and N179. 2 cysteine pairs are disulfide-bonded: C214–C243 and C227–C234. The Cell attachment site signature appears at R279–D281. Disulfide bonds link C296/C372, C410/C427, C422/C502, and C431/C500. The segment at V518 to Q912 is disordered. A compositionally biased stretch (polar residues) spans A526–G541. 3 stretches are compositionally biased toward basic and acidic residues: residues K544–G559, G672–S707, and H714–E731. N-linked (GlcNAc...) asparagine glycosylation occurs at N676. Polar residues predominate over residues T732–G763. N743 is a glycosylation site (N-linked (GlcNAc...) asparagine). The segment covering A766–S776 has biased composition (low complexity). The N-linked (GlcNAc...) asparagine glycan is linked to N785. Residues G796 to M807 show a composition bias toward basic and acidic residues. Low complexity predominate over residues D814–D863. Positions T864–F888 are enriched in basic and acidic residues. The span at R890 to R906 shows a compositional bias: polar residues. An N-linked (GlcNAc...) asparagine glycan is attached at N936. Residues T1004–W1025 form a helical membrane-spanning segment. The Cytoplasmic segment spans residues N1026–S1070.

It is found in the membrane. Its function is as follows. Binds to Neu5Gc-sialylated receptors on macaque erythrocytes. The sequence is that of Duffy receptor gamma form from Plasmodium knowlesi.